We begin with the raw amino-acid sequence, 415 residues long: Amino acid decarboxylase lolD2 (415 aa).

N6-(pyridoxal phosphate)lysine is present on K62. Pyridoxal 5'-phosphate-binding positions include S194, G231, and 266-269; that span reads EPGT. 315–316 provides a ligand contact to substrate; that stretch reads IV. C351 (proton donor; shared with dimeric partner) is an active-site residue. C351 is modified (S-nitrosocysteine). D352 is a binding site for substrate. Pyridoxal 5'-phosphate is bound at residue Y381.

The protein belongs to the Orn/Lys/Arg decarboxylase class-II family. As to quaternary structure, homodimer. Pyridoxal 5'-phosphate is required as a cofactor.

It participates in alkaloid biosynthesis. Its function is as follows. Amino acid decarboxylase; part of the gene cluster that mediates the biosynthesis of loline alkaloids, potent insecticidal agents composed of a pyrrolizidine ring system and an uncommon ether bridge linking carbons 2 and 7. Lolines are structurally differentiated by the various modifications of the L-amino group and include norloline, loline, N-methylloline, N-acetylloline, N-acetylnorloline, and N-formylloline. The first committed step is the condensation of O-acetyl-L-homoserine (derived from L-aspartic acid) and L-proline, probably catalyzed by the gamma-type pyridoxal 5'-phosphate(PLP)-dependent enzyme lolC, to give the diamino diacid, NACPP. Ensuing cyclization, decarboxylation, and acetylation steps yield 1-exo-acetamidopyrrolizidine (AcAP). LolO is required for installation of the ether bridge upon the pathway intermediate, 1-exo-acetamidopyrrolizidine (AcAP). In sequential 2-oxoglutarate- and O(2)-consuming steps, lolO removes hydrogens from C2 and C7 of AcAP to form both carbon-oxygen bonds in N-acetylnorloline (NANL), the precursor to all other lolines. The enzymes lolD, lolE, lolF and lolT have also been proposed to be involved in the ether-bridge installation. Further processing of the exocyclic moiety of NANL by fungal N-acetamidase (LolN), methyltransferase (LolM), and cytochrome P450 (LolP) enzymes, with occasional involvement of a plant acetyltransferase, generates the other known lolines. LolN transforms NANL to norlonine which is monomethylated and dimethylated to respectively lonine and N-methyllonine (NML) by lolM. LolP catalyzes hydroxylation of the methyl group in N-methylloline (NML) and further oxygenation to N-formylloline (NFL). A plant acetyltransferase is responsible for the acetylation of loline to form N-acetylloline (NAL). LolA might interact with aspartate kinase to prevent feedback inhibition of its activity by these end products and thereby promote production of L-homoserine from L-aspartate. This Epichloe uncinata (Endophyte fungus) protein is Amino acid decarboxylase lolD2.